Here is a 359-residue protein sequence, read N- to C-terminus: Peptide chain release factor 1 (359 aa).

Glutamine 236 is subject to N5-methylglutamine. The disordered stretch occupies residues 288-307 (QDEQDAERKSTIGTGDRSER). The span at 293–307 (AERKSTIGTGDRSER) shows a compositional bias: basic and acidic residues.

It belongs to the prokaryotic/mitochondrial release factor family. Post-translationally, methylated by PrmC. Methylation increases the termination efficiency of RF1.

Its subcellular location is the cytoplasm. Its function is as follows. Peptide chain release factor 1 directs the termination of translation in response to the peptide chain termination codons UAG and UAA. The protein is Peptide chain release factor 1 (prfA) of Streptococcus gordonii (strain Challis / ATCC 35105 / BCRC 15272 / CH1 / DL1 / V288).